The sequence spans 370 residues: Glutamate 5-kinase (370 aa).

An ATP-binding site is contributed by Lys-13. Substrate is bound by residues Ser-54, Asp-140, and Asn-152. ATP is bound by residues 172-173 and 214-220; these read SD and SGGMVTK. Residues 278 to 355 form the PUA domain; it reads TGTLVLDAGA…GEIEAILGFR (78 aa).

Belongs to the glutamate 5-kinase family.

The protein resides in the cytoplasm. It catalyses the reaction L-glutamate + ATP = L-glutamyl 5-phosphate + ADP. The protein operates within amino-acid biosynthesis; L-proline biosynthesis; L-glutamate 5-semialdehyde from L-glutamate: step 1/2. In terms of biological role, catalyzes the transfer of a phosphate group to glutamate to form L-glutamate 5-phosphate. This chain is Glutamate 5-kinase, found in Paramagnetospirillum magneticum (strain ATCC 700264 / AMB-1) (Magnetospirillum magneticum).